Here is a 473-residue protein sequence, read N- to C-terminus: MKTLYSLRRFYPVETLFNGTLALTGRDQETTGFAWWAGNARLINLSGKLLGAHVAHAGLIVFWAGAMNLFEVAHFVPEKPMYEQGLILLPHLATLGWGVGPGGEVIDTFPYFVSGVLHLISSAVLGFGGIYHALLGPETLEESFPFFGYVWKDRNKMTTILGIHLILLGIGAFLLVFKALYFGGVYDTWAPGGGDVRKITNLTLSPSVIFGYLLKSPFGGEGWIVSVDDLEDIIGGHVWLGSICILGGIWHILTKPFAWARRAFVWSGEAYLSYSLGALAIFGFVACCFVWFNNTAYPSEFYGPTGPEASQAQAFTFLVRDQRLGANVGSAQGPTGLGKYLMRSPTGEVIFGGETMRFWDLRAPWLEPLRGPNGLDLGRLKKDIQPWQERRSAEYMTHAPLGSLNSVGGVATEINAVNYVSPRSWLATSHFVLGFFFFVGHLWHAGRARAAAAGFEKGIDRDFEPVLSMTPLN.

A propeptide spanning residues 1–14 (MKTLYSLRRFYPVE) is cleaved from the precursor. Position 15 is an N-acetylthreonine (T15). At T15 the chain carries Phosphothreonine. Transmembrane regions (helical) follow at residues 69–93 (LFEVAHFVPEKPMYEQGLILLPHLA), 134–155 (LLGPETLEESFPFFGYVWKDRN), 178–200 (KALYFGGVYDTWAPGGGDVRKIT), 255–275 (KPFAWARRAFVWSGEAYLSYS), and 291–312 (WFNNTAYPSEFYGPTGPEASQA). Residue E367 participates in [CaMn4O5] cluster binding. The chain crosses the membrane as a helical span at residues 447–471 (RARAAAAGFEKGIDRDFEPVLSMTP).

The protein belongs to the PsbB/PsbC family. PsbC subfamily. In terms of assembly, PSII is composed of 1 copy each of membrane proteins PsbA, PsbB, PsbC, PsbD, PsbE, PsbF, PsbH, PsbI, PsbJ, PsbK, PsbL, PsbM, PsbT, PsbX, PsbY, PsbZ, Psb30/Ycf12, at least 3 peripheral proteins of the oxygen-evolving complex and a large number of cofactors. It forms dimeric complexes. Requires Binds multiple chlorophylls and provides some of the ligands for the Ca-4Mn-5O cluster of the oxygen-evolving complex. It may also provide a ligand for a Cl- that is required for oxygen evolution. PSII binds additional chlorophylls, carotenoids and specific lipids. as cofactor.

The protein resides in the plastid. The protein localises to the chloroplast thylakoid membrane. In terms of biological role, one of the components of the core complex of photosystem II (PSII). It binds chlorophyll and helps catalyze the primary light-induced photochemical processes of PSII. PSII is a light-driven water:plastoquinone oxidoreductase, using light energy to abstract electrons from H(2)O, generating O(2) and a proton gradient subsequently used for ATP formation. This Piper cenocladum (Ant piper) protein is Photosystem II CP43 reaction center protein.